The chain runs to 332 residues: Ribosomal RNA small subunit methyltransferase H (332 aa).

Residues 39 to 41 (GGY), Asp-56, Phe-83, Asp-100, and Gln-107 each bind S-adenosyl-L-methionine.

It belongs to the methyltransferase superfamily. RsmH family.

It localises to the cytoplasm. It catalyses the reaction cytidine(1402) in 16S rRNA + S-adenosyl-L-methionine = N(4)-methylcytidine(1402) in 16S rRNA + S-adenosyl-L-homocysteine + H(+). Its function is as follows. Specifically methylates the N4 position of cytidine in position 1402 (C1402) of 16S rRNA. The sequence is that of Ribosomal RNA small subunit methyltransferase H from Bartonella quintana (strain Toulouse) (Rochalimaea quintana).